A 331-amino-acid chain; its full sequence is L-lactate dehydrogenase A chain (331 aa).

NAD(+) is bound by residues 29–57 (GMVG…MEDK) and Arg98. The substrate site is built by Arg105, Asn137, and Arg168. Asn137 is a binding site for NAD(+). His192 acts as the Proton acceptor in catalysis. Thr247 contributes to the substrate binding site.

It belongs to the LDH/MDH superfamily. LDH family. As to quaternary structure, homotetramer.

Its subcellular location is the cytoplasm. The enzyme catalyses (S)-lactate + NAD(+) = pyruvate + NADH + H(+). The protein operates within fermentation; pyruvate fermentation to lactate; (S)-lactate from pyruvate: step 1/1. In terms of biological role, interconverts simultaneously and stereospecifically pyruvate and lactate with concomitant interconversion of NADH and NAD(+). The polypeptide is L-lactate dehydrogenase A chain (ldha) (Paranotothenia magellanica (Maori cod)).